The following is a 344-amino-acid chain: Dihydroorotate dehydrogenase (quinone) (344 aa).

Residues 65 to 69 and Thr89 each bind FMN; that span reads AGLDK. Substrate is bound at residue Lys69. Substrate is bound at residue 114-118; it reads NRMGF. FMN-binding residues include Asn145 and Asn178. Asn178 lines the substrate pocket. Ser181 functions as the Nucleophile in the catalytic mechanism. Substrate is bound at residue Asn183. FMN-binding residues include Lys223 and Thr251. Position 252–253 (252–253) interacts with substrate; sequence NT. FMN-binding positions include Gly274, Gly303, and 324–325; that span reads YS.

This sequence belongs to the dihydroorotate dehydrogenase family. Type 2 subfamily. In terms of assembly, monomer. Requires FMN as cofactor.

The protein localises to the cell membrane. It carries out the reaction (S)-dihydroorotate + a quinone = orotate + a quinol. It functions in the pathway pyrimidine metabolism; UMP biosynthesis via de novo pathway; orotate from (S)-dihydroorotate (quinone route): step 1/1. Catalyzes the conversion of dihydroorotate to orotate with quinone as electron acceptor. The chain is Dihydroorotate dehydrogenase (quinone) from Cupriavidus necator (strain ATCC 17699 / DSM 428 / KCTC 22496 / NCIMB 10442 / H16 / Stanier 337) (Ralstonia eutropha).